The primary structure comprises 429 residues: Glutamyl-tRNA reductase (429 aa).

Substrate contacts are provided by residues 50–53 (TCNR), serine 116, 121–123 (EPQ), and glutamine 127. The active-site Nucleophile is cysteine 51. 196–201 (GAGEMA) lines the NADP(+) pocket.

This sequence belongs to the glutamyl-tRNA reductase family. Homodimer.

The catalysed reaction is (S)-4-amino-5-oxopentanoate + tRNA(Glu) + NADP(+) = L-glutamyl-tRNA(Glu) + NADPH + H(+). It participates in porphyrin-containing compound metabolism; protoporphyrin-IX biosynthesis; 5-aminolevulinate from L-glutamyl-tRNA(Glu): step 1/2. Catalyzes the NADPH-dependent reduction of glutamyl-tRNA(Glu) to glutamate 1-semialdehyde (GSA). The protein is Glutamyl-tRNA reductase of Thermodesulfovibrio yellowstonii (strain ATCC 51303 / DSM 11347 / YP87).